Reading from the N-terminus, the 372-residue chain is Mannan endo-1,4-beta-mannosidase 8 (372 aa).

Substrate contacts are provided by Trp-57 and Asn-172. Glu-173 serves as the catalytic Proton donor. Tyr-253 contacts substrate. Glu-293 functions as the Nucleophile in the catalytic mechanism. Trp-335 contacts substrate.

The protein belongs to the glycosyl hydrolase 5 (cellulase A) family. In terms of tissue distribution, expressed in stems and leaves and seeds.

The enzyme catalyses Random hydrolysis of (1-&gt;4)-beta-D-mannosidic linkages in mannans, galactomannans and glucomannans.. This chain is Mannan endo-1,4-beta-mannosidase 8 (MAN8), found in Oryza sativa subsp. japonica (Rice).